The chain runs to 423 residues: Putative serpin-Z12 (423 aa).

Residues 1–25 are disordered; that stretch reads MAALAAGEPFSGRATGGDGGVRSDV. The interval 370 to 394 is RCL; it reads GTVAAASTAVVMMQKGSSLPPVDFV.

The protein belongs to the serpin family.

Functionally, probable serine protease inhibitor. The sequence is that of Putative serpin-Z12 from Oryza sativa subsp. japonica (Rice).